The sequence spans 342 residues: NAD kinase (342 aa).

Catalysis depends on aspartate 66, which acts as the Proton acceptor. NAD(+) contacts are provided by residues 66–67 (DG), arginine 71, 141–142 (ND), lysine 152, aspartate 171, 182–187 (TAYAFS), and alanine 206.

The protein belongs to the NAD kinase family. A divalent metal cation is required as a cofactor.

The protein localises to the cytoplasm. The enzyme catalyses NAD(+) + ATP = ADP + NADP(+) + H(+). Its function is as follows. Involved in the regulation of the intracellular balance of NAD and NADP, and is a key enzyme in the biosynthesis of NADP. Catalyzes specifically the phosphorylation on 2'-hydroxyl of the adenosine moiety of NAD to yield NADP. In Bifidobacterium longum (strain NCC 2705), this protein is NAD kinase.